The following is a 599-amino-acid chain: Elongation factor 4 (599 aa).

Residues 5–187 (SHIRNFSIIA…HLVRVIPPPQ (183 aa)) form the tr-type G domain. GTP contacts are provided by residues 17-22 (DHGKST) and 134-137 (NKMD).

This sequence belongs to the TRAFAC class translation factor GTPase superfamily. Classic translation factor GTPase family. LepA subfamily.

The protein resides in the cell inner membrane. The enzyme catalyses GTP + H2O = GDP + phosphate + H(+). Its function is as follows. Required for accurate and efficient protein synthesis under certain stress conditions. May act as a fidelity factor of the translation reaction, by catalyzing a one-codon backward translocation of tRNAs on improperly translocated ribosomes. Back-translocation proceeds from a post-translocation (POST) complex to a pre-translocation (PRE) complex, thus giving elongation factor G a second chance to translocate the tRNAs correctly. Binds to ribosomes in a GTP-dependent manner. The sequence is that of Elongation factor 4 from Azotobacter vinelandii (strain DJ / ATCC BAA-1303).